The following is a 79-amino-acid chain: Cell division protein ZapB (79 aa).

The stretch at 3–79 (LEVFEKLEAK…QALLGRMEEV (77 aa)) forms a coiled coil. Over residues 36–45 (SLTQEVQSAQ) the composition is skewed to polar residues. The interval 36–63 (SLTQEVQSAQHQREELERENNSLKEQQS) is disordered. Residues 46-57 (HQREELERENNS) show a composition bias toward basic and acidic residues.

It belongs to the ZapB family. Homodimer. The ends of the coiled-coil dimer bind to each other, forming polymers. Interacts with FtsZ.

It is found in the cytoplasm. Functionally, non-essential, abundant cell division factor that is required for proper Z-ring formation. It is recruited early to the divisome by direct interaction with FtsZ, stimulating Z-ring assembly and thereby promoting cell division earlier in the cell cycle. Its recruitment to the Z-ring requires functional FtsA or ZipA. This is Cell division protein ZapB from Salmonella agona (strain SL483).